The chain runs to 456 residues: IQ domain-containing protein IQM3 (456 aa).

The 30-residue stretch at 46-75 (TRLAAVKVQKVYRSYRTRRRLADSVVVAEE) folds into the IQ domain. Residues 315-358 (SEDSDSYDDYVKSNGGSEPEPLKKEDTTFQAETETDENGNGTVG) are disordered.

Expressed in roots, rosette and cauline leaves, flowers and siliques, and at lower levels in stems.

The protein resides in the cytoplasm. Its subcellular location is the nucleus. Functionally, may be involved in biotic and abiotic stress responses. The protein is IQ domain-containing protein IQM3 of Arabidopsis thaliana (Mouse-ear cress).